The sequence spans 635 residues: Probable clathrin assembly protein At4g32285 (635 aa).

The region spanning Val-23–Arg-159 is the ENTH domain. The interval Arg-157–Phe-208 is disordered. Residues Ser-165–Asp-174 are compositionally biased toward low complexity. Residues Gly-175 to Arg-184 show a composition bias toward basic and acidic residues. Ser-207 is modified (phosphoserine). At Thr-224 the chain carries Phosphothreonine. Basic and acidic residues predominate over residues Ala-357–Glu-369. The disordered stretch occupies residues Ala-357–Gln-412. Residues Leu-390–Gln-409 show a composition bias toward pro residues.

It is found in the membrane. Its subcellular location is the clathrin-coated pit. The protein resides in the golgi apparatus. The protein localises to the cytoplasmic vesicle. It localises to the clathrin-coated vesicle. The sequence is that of Probable clathrin assembly protein At4g32285 from Arabidopsis thaliana (Mouse-ear cress).